Consider the following 439-residue polypeptide: Ribosomal protein uS12 methylthiotransferase RimO (439 aa).

The region spanning 3–118 (KKFYITTLGC…AGKILREKFP (116 aa)) is the MTTase N-terminal domain. The [4Fe-4S] cluster site is built by cysteine 12, cysteine 48, cysteine 81, cysteine 157, cysteine 161, and cysteine 164. The Radical SAM core domain occupies 143-370 (NYSKPYAYVK…RDVHLAILEE (228 aa)). One can recognise a TRAM domain in the interval 373 to 438 (ESRIGQTYDA…EYDMNGTWIS (66 aa)).

It belongs to the methylthiotransferase family. RimO subfamily. [4Fe-4S] cluster serves as cofactor.

Its subcellular location is the cytoplasm. It catalyses the reaction L-aspartate(89)-[ribosomal protein uS12]-hydrogen + (sulfur carrier)-SH + AH2 + 2 S-adenosyl-L-methionine = 3-methylsulfanyl-L-aspartate(89)-[ribosomal protein uS12]-hydrogen + (sulfur carrier)-H + 5'-deoxyadenosine + L-methionine + A + S-adenosyl-L-homocysteine + 2 H(+). Catalyzes the methylthiolation of an aspartic acid residue of ribosomal protein uS12. The chain is Ribosomal protein uS12 methylthiotransferase RimO from Leptospira borgpetersenii serovar Hardjo-bovis (strain JB197).